A 328-amino-acid polypeptide reads, in one-letter code: Flagellar motor switch protein FliM (328 aa).

Residues 1–45 are interaction with unphosphorylated CheY; sequence MSDVLSQEEINQLIEALMKGELKEEDLLKEEEEKKVKPYDFKRPS.

The protein belongs to the FliM family. Interacts (via N-terminus) with unphosphorylated CheY. Interacts (via central domain) with FliG (via central domain or via central domain and C-terminus).

The protein localises to the cell inner membrane. It is found in the bacterial flagellum basal body. FliM is one of three proteins (FliG, FliN, FliM) that forms the rotor-mounted switch complex (C ring), located at the base of the basal body. This complex interacts with the CheY and CheX chemotaxis proteins, in addition to contacting components of the motor that determine the direction of flagellar rotation. The polypeptide is Flagellar motor switch protein FliM (Thermotoga maritima (strain ATCC 43589 / DSM 3109 / JCM 10099 / NBRC 100826 / MSB8)).